Reading from the N-terminus, the 66-residue chain is MPKMKTHRGGAKRVKRTGSGKLKRSRAYTSHLFANKSTKQKRGLRKASLVSKGDQKRVAQMLTYVK.

Basic residues predominate over residues 1 to 26 (MPKMKTHRGGAKRVKRTGSGKLKRSR). 2 disordered regions span residues 1–28 (MPKM…SRAY) and 36–55 (KSTK…KGDQ).

It belongs to the bacterial ribosomal protein bL35 family.

The chain is Large ribosomal subunit protein bL35 from Macrococcus caseolyticus (strain JCSC5402) (Macrococcoides caseolyticum).